An 834-amino-acid chain; its full sequence is ATP-dependent RNA helicase ddx23 (834 aa).

Disordered regions lie at residues 1–245 (MDPP…TQFS) and 322–371 (FGGY…GKQI). Basic and acidic residues predominate over residues 10-25 (SKRDTKKKDEVNKEQP). Residues 42-54 (SNPTQEEPTNTLQ) are compositionally biased toward polar residues. Basic and acidic residues-rich tracts occupy residues 70–110 (GLKE…DYRD), 117–164 (GRDR…RRDG), 171–205 (RRRD…RDND), and 231–245 (DIHK…TQFS). A compositionally biased stretch (low complexity) spans 328–362 (NNNNNGNHYNGNIYNNNNNNNNNNNNNNNINNNNN). Residues 413-441 (RTWQESNLPREILEAIRQLGYEKPSPIQM) carry the Q motif motif. In terms of domain architecture, Helicase ATP-binding spans 444–643 (IPISLTGRDI…KKYLRRPCTI (200 aa)). An ATP-binding site is contributed by 457 to 464 (AETGSGKT). The DEAD box motif lies at 570–573 (DEAD). In terms of domain architecture, Helicase C-terminal spans 654–815 (RIRQTVIFVK…IVPIELLKHP (162 aa)). Positions 813 to 834 (KHPSSQQKHGSSKDHNKSVIFK) are disordered. The segment covering 823 to 834 (SSKDHNKSVIFK) has biased composition (basic and acidic residues).

The protein belongs to the DEAD box helicase family. DDX23/PRP28 subfamily.

Its subcellular location is the cytoplasm. It localises to the nucleus. It catalyses the reaction ATP + H2O = ADP + phosphate + H(+). Functionally, probable ATP-dependent RNA helicase which may be involved in mRNA splicing. This chain is ATP-dependent RNA helicase ddx23 (helB2), found in Dictyostelium discoideum (Social amoeba).